Reading from the N-terminus, the 685-residue chain is Transforming growth factor beta activator LRRC33 (685 aa).

Residues 1–27 (MPVCGCLSVVLSHAVVLLMLVLHSASG) form the signal peptide. Residues 28–640 (HPQTFPCRLI…CGFTNNNKES (613 aa)) lie on the Extracellular side of the membrane. One can recognise an LRRNT domain in the interval 29–56 (PQTFPCRLIQRVALCSGRQLSVIPDCLP). 7 LRR repeats span residues 57-79 (HETEEIFFDRNLLENLQDGLSRY), 80-102 (PFLRMFSCANNQLMTVAETAFIE), 103-129 (SHLLENLNLANNELHHGHKQVAQAFRS), 130-154 (LTQLKTLDLSGNGLSEDMVSVLVAN), 155-178 (LSSLESLYLSRNGMQRLDESTFRD), 180-201 (HQLKELNVERNLLFEISGAFDH), and 202-225 (MKKLQRLNLAFNCLPCLVNFEMTQ). Asn154 carries an N-linked (GlcNAc...) asparagine glycan. Asn230 and Asn244 each carry an N-linked (GlcNAc...) asparagine glycan. 2 LRR repeats span residues 248–271 (TFQLETLDLSDNHLLFFPFLPTNN) and 273–296 (IRTLLLSNNRVGFYQHLANSTSSN). Residues Asn291, Asn296, Asn309, Asn312, and Asn325 are each glycosylated (N-linked (GlcNAc...) asparagine). LRR repeat units lie at residues 326–349 (LSSVEFLDLSENKVNYFPQGFIKQ), 351–373 (PQLYWLKLRSNCLQSFSLTSEDL), 374–397 (PVTIYELDVSRNRLTEIKASQTSK), 400–423 (LNNLTHLNLSTNDLQNFPPMIFTS), 425–447 (PNLNTLDLSHNTVDVCYSSNYMG), 457–480 (MASLKQLYLADCSIQNVPSSAFKG), 482–503 (SLTHLELSNNPNLHLKQQSLKG), 505–526 (ANTLQHLGIGNTGLQDFDFSPY), 527–549 (TNLKSLNISRNSLSKLPDSLMAL), 551–571 (LKLLDLRDNSLTTIKSEHASL), and 573–596 (AKKLQTVYMNGNAFNCCHLDWFRT). N-linked (GlcNAc...) asparagine glycosylation is found at Asn402 and Asn407. The N-linked (GlcNAc...) asparagine glycan is linked to Asn533. Residues 597–635 (FGENKGIHVADLSEITCLDLNYRRHKVVLTDAVYCGFTN) form the LRRCT domain. A helical membrane pass occupies residues 641 to 661 (VVWYILLFVTVSVSIMGISVI). The Cytoplasmic portion of the chain corresponds to 662–685 (YMLTFKPRMLPRVIKKKCWRPTSY).

This sequence belongs to the LRRC32/LRRC33 family.

The protein resides in the cell membrane. It localises to the endoplasmic reticulum membrane. Functionally, key regulator of transforming growth factor beta-1 (TGFB1) specifically required for microglia function in the nervous system. Required for activation of latent TGF-beta-1 in macrophages and microglia: associates specifically via disulfide bonds with the Latency-associated peptide (LAP), which is the regulatory chain of TGFB1, and regulates integrin-dependent activation of TGF-beta-1. TGF-beta-1 activation mediated by lrrc33/nrros is highly localized: there is little spreading of TGF-beta-1 activated from one microglial cell to neighboring microglia, suggesting the existence of localized and selective activation of TGF-beta-1 by lrrc33/nrros. In Danio rerio (Zebrafish), this protein is Transforming growth factor beta activator LRRC33.